A 141-amino-acid polypeptide reads, in one-letter code: Nucleoside diphosphate kinase (141 aa).

Lysine 11, phenylalanine 59, arginine 87, threonine 93, arginine 104, and asparagine 114 together coordinate ATP. The active-site Pros-phosphohistidine intermediate is histidine 117.

Belongs to the NDK family. Homotetramer. It depends on Mg(2+) as a cofactor.

The protein resides in the cytoplasm. The enzyme catalyses a 2'-deoxyribonucleoside 5'-diphosphate + ATP = a 2'-deoxyribonucleoside 5'-triphosphate + ADP. The catalysed reaction is a ribonucleoside 5'-diphosphate + ATP = a ribonucleoside 5'-triphosphate + ADP. Functionally, major role in the synthesis of nucleoside triphosphates other than ATP. The ATP gamma phosphate is transferred to the NDP beta phosphate via a ping-pong mechanism, using a phosphorylated active-site intermediate. In Janthinobacterium sp. (strain Marseille) (Minibacterium massiliensis), this protein is Nucleoside diphosphate kinase.